A 151-amino-acid polypeptide reads, in one-letter code: MARINYSVKEDPETTSKAMGSELHISPKKSREVCCKIKGMKVPEARKFLEDVIALKQAVPFKRHHDGSGHRKGPMAAGRYPVSASKEILKILRNAESNAEYKGLEPANMYITHAAIQRGRVIRGFMPRARGRATPKDTETVNIEMILSEVR.

The segment at 1–25 (MARINYSVKEDPETTSKAMGSELHI) is disordered.

It belongs to the universal ribosomal protein uL22 family. As to quaternary structure, part of the 50S ribosomal subunit.

Its function is as follows. This protein binds specifically to 23S rRNA. It makes multiple contacts with different domains of the 23S rRNA in the assembled 50S subunit and ribosome. Functionally, the globular domain of the protein is located near the polypeptide exit tunnel on the outside of the subunit, while an extended beta-hairpin is found that lines the wall of the exit tunnel in the center of the 70S ribosome. The sequence is that of Large ribosomal subunit protein uL22 from Methanosarcina barkeri (strain Fusaro / DSM 804).